The chain runs to 186 residues: Elongation factor P (186 aa).

The protein belongs to the elongation factor P family.

It localises to the cytoplasm. It participates in protein biosynthesis; polypeptide chain elongation. In terms of biological role, involved in peptide bond synthesis. Stimulates efficient translation and peptide-bond synthesis on native or reconstituted 70S ribosomes in vitro. Probably functions indirectly by altering the affinity of the ribosome for aminoacyl-tRNA, thus increasing their reactivity as acceptors for peptidyl transferase. The sequence is that of Elongation factor P from Synechococcus sp. (strain RCC307).